We begin with the raw amino-acid sequence, 310 residues long: Atrochrysone carboxyl ACP thioesterase CPUR_05436 (310 aa).

Zn(2+)-binding residues include His-105, His-107, Asp-109, and His-110. Asp-109 (proton donor/acceptor) is an active-site residue.

It belongs to the metallo-beta-lactamase superfamily. Zn(2+) serves as cofactor.

It catalyses the reaction atrochrysone carboxyl-[ACP] + H2O = atrochrysone carboxylate + holo-[ACP] + H(+). It functions in the pathway pigment biosynthesis. Atrochrysone carboxyl ACP thioesterase; part of the ergochrome gene cluster responsible for the typical purple-black color of the ergot sclerotia. The ergochrome gene cluster produces several ergot pigments including the yellow ergochrome secalonic acid and its derivatives, as well as the red anthraquinones endocrocin and clavorubin. The pathway begins with the synthesis of atrochrysone thioester by the polyketide synthase (PKS) CPUR_05437. The atrochrysone carboxyl ACP thioesterase CPUR_05436 then breaks the thioester bond and releases the atrochrysone carboxylic acid from CPUR_05437. The atrochrysone carboxylic acid is then converted to atrochrysone which is further transformed into emodin anthrone. The next step is performed by the anthrone oxygenase CPUR_05434 that catalyzes the oxidation of emodinanthrone to emodin. Emodin is further modified to yield monodictyphenone via several steps involving CPUR_05427, CPUR_05428, CPUR_05429 and CPUR_05430. The short chain dehydrogenase/reductase CPUR_05418 then catalyzes the C-5 ketoreduction to give the xanthone skeleton of the monomeric units. Ergochromes formation requires further dimerization steps of different xanthone units, probably catalyzed by the cytochrome P450 monooxygenase CPUR_05419. CPUR_05425, CPUR_05426 and CPUR_05431 are unique to Claviceps, thus it is likely that they are involved in further modification of xanthone units or in their dimerization. The yellow ergochromes and the red anthraquinone pigments endocrocin and clavorubin are products from the same PKS derived precursors and the latter are likely shunt products in the pathway of xanthone biosynthesis. It is proposed that atrochrysone carboxylic acid released from the PKS CPUR_05437 can also be converted to endocrocin anthrone which is further oxidized into endocrocin by CPUR_05435. Endocrocin could be then modified to clavorubin, possibly by CPUR_05423 and CPUR_05431. Clavorubin is the principal anthraquinone metabolite produced by the cluster with a much higher yield compared to endocrocin. In Claviceps purpurea (strain 20.1) (Ergot fungus), this protein is Atrochrysone carboxyl ACP thioesterase CPUR_05436.